The primary structure comprises 126 residues: Small ribosomal subunit protein uS13 (126 aa).

The tract at residues 96 to 126 (LPVRGQQTKTNARTRKGRRKGTVANKKKVSK) is disordered. The segment covering 107 to 126 (ARTRKGRRKGTVANKKKVSK) has biased composition (basic residues).

Belongs to the universal ribosomal protein uS13 family. As to quaternary structure, part of the 30S ribosomal subunit. Forms a loose heterodimer with protein S19. Forms two bridges to the 50S subunit in the 70S ribosome.

Functionally, located at the top of the head of the 30S subunit, it contacts several helices of the 16S rRNA. In the 70S ribosome it contacts the 23S rRNA (bridge B1a) and protein L5 of the 50S subunit (bridge B1b), connecting the 2 subunits; these bridges are implicated in subunit movement. Contacts the tRNAs in the A and P-sites. In Hydrogenobaculum sp. (strain Y04AAS1), this protein is Small ribosomal subunit protein uS13.